The following is a 171-amino-acid chain: Endoribonuclease YbeY (171 aa).

His-130, His-134, and His-140 together coordinate Zn(2+).

Belongs to the endoribonuclease YbeY family. It depends on Zn(2+) as a cofactor.

Its subcellular location is the cytoplasm. Functionally, single strand-specific metallo-endoribonuclease involved in late-stage 70S ribosome quality control and in maturation of the 3' terminus of the 16S rRNA. In Neisseria meningitidis serogroup C / serotype 2a (strain ATCC 700532 / DSM 15464 / FAM18), this protein is Endoribonuclease YbeY.